Here is a 153-residue protein sequence, read N- to C-terminus: MKLAAPSLALLLSTATLVSGAWNRRSRSCGGVLRDPPGKIFNSDGPQKDCVWTIKVKPHFHVVLAIPPLNLSCGKEYVELLDGPPGSEIIGKICGGISLVFRSSSNIATIKYLRTSGQRASPFHIYYYADPEGPLQFPYFDRQTIIATEKNIP.

The first 20 residues, 1–20 (MKLAAPSLALLLSTATLVSG), serve as a signal peptide directing secretion. Residue Ala-21 is modified to N-acetylalanine. 2 disulfide bridges follow: Cys-29/Cys-50 and Cys-73/Cys-94. One can recognise a CUB domain in the interval 29–130 (CGGVLRDPPG…SPFHIYYYAD (102 aa)). The segment at 93–130 (ICGGISLVFRSSSNIATIKYLRTSGQRASPFHIYYYAD) is heparin-binding.

It belongs to the spermadhesin family. In terms of processing, partial N-acetylation differentiates isoforms AWN-1 (not acetylated) and AWN-2 (acetylated).

It localises to the secreted. AWN proteins mediate the binding of boar spermatozoa to component(s) of the egg's zona pellucida by a carbohydrate-binding mechanism. Awn proteins are secretory components of the male accessory glands being coated to the sperm surface at the time of ejaculation. They possess as well heparin-, serine-protease-inhibitor-binding capability. The sequence is that of Carbohydrate-binding protein AWN from Sus scrofa (Pig).